A 513-amino-acid polypeptide reads, in one-letter code: 2-isopropylmalate synthase (513 aa).

The region spanning 4-268 is the Pyruvate carboxyltransferase domain; the sequence is IKIFDTTLRD…ETGIRTELIY (265 aa). Aspartate 13, histidine 203, histidine 205, and asparagine 239 together coordinate Mn(2+). The regulatory domain stretch occupies residues 392 to 513; the sequence is RLVHFHVHTG…GLLRKNGGVE (122 aa).

This sequence belongs to the alpha-IPM synthase/homocitrate synthase family. LeuA type 1 subfamily. Homodimer. Mn(2+) serves as cofactor.

Its subcellular location is the cytoplasm. The catalysed reaction is 3-methyl-2-oxobutanoate + acetyl-CoA + H2O = (2S)-2-isopropylmalate + CoA + H(+). Its pathway is amino-acid biosynthesis; L-leucine biosynthesis; L-leucine from 3-methyl-2-oxobutanoate: step 1/4. Its function is as follows. Catalyzes the condensation of the acetyl group of acetyl-CoA with 3-methyl-2-oxobutanoate (2-ketoisovalerate) to form 3-carboxy-3-hydroxy-4-methylpentanoate (2-isopropylmalate). This Thermotoga neapolitana (strain ATCC 49049 / DSM 4359 / NBRC 107923 / NS-E) protein is 2-isopropylmalate synthase.